The primary structure comprises 355 residues: Trans-enoyl reductase (355 aa).

45–48 (VDTK) is a binding site for NADP(+). 131 to 138 (ISFMTTGL) is a substrate binding site. NADP(+) is bound by residues 166-169 (SSAT), 189-192 (SPRN), Tyr-207, and 254-255 (LE). 275–279 (GPQML) serves as a coordination point for substrate. Residue 344 to 345 (IS) coordinates NADP(+).

This sequence belongs to the zinc-containing alcohol dehydrogenase family. As to quaternary structure, monomer.

The catalysed reaction is L-serine + 7 malonyl-CoA + acetyl-CoA + 2 S-adenosyl-L-methionine + ATP + 8 NADPH + 11 H(+) = (5S)-3-[(2E,6R,8E,10E,12E)-2,6-dimethyltetradeca-2,8,10,12-tetraenoyl]-5-(hydroxymethyl)pyrrolidine-2,4-dione + AMP + 2 S-adenosyl-L-homocysteine + 7 CO2 + diphosphate + 8 NADP(+) + 8 CoA + 6 H2O. Its pathway is mycotoxin biosynthesis. Hybrid PKS-NRPS synthetase; part of the gene cluster that mediates the biosynthesis of trichosetin, a trans-fused decalin-containing tetramic acid with antimicrobial activity. The PKS module of PKS-NRPS1 together with the enoylreductase (ER) catalyze the formation of the polyketide unit which is then conjugated to L-serine by the condensation domain of the PKS-NRPS1 NRPS module. Activity of the Dieckmann cyclase domain (RED) results in release of the Dieckmann product intermediate. Diels-Alderase (DA) is involved in endo-selective Diels-Alder cycloaddition to form the decalin ring, leading to the production of N-desmethylequisetin also called trichosetin. The cluster does not contain the equisetin N-methyltransferase and consequently, trichosetin is isolated as final product. The protein is Trans-enoyl reductase of Gibberella fujikuroi (strain CBS 195.34 / IMI 58289 / NRRL A-6831) (Bakanae and foot rot disease fungus).